The chain runs to 635 residues: Threonine--tRNA ligase (635 aa).

In terms of domain architecture, TGS spans 1–61; the sequence is MINISFPDGS…EHDCKLRILT (61 aa). Residues 242–533 are catalytic; sequence DHRKIGKELD…LIEEYAGKFP (292 aa). C333, H384, and H510 together coordinate Zn(2+).

It belongs to the class-II aminoacyl-tRNA synthetase family. Homodimer. The cofactor is Zn(2+).

The protein localises to the cytoplasm. It catalyses the reaction tRNA(Thr) + L-threonine + ATP = L-threonyl-tRNA(Thr) + AMP + diphosphate + H(+). Functionally, catalyzes the attachment of threonine to tRNA(Thr) in a two-step reaction: L-threonine is first activated by ATP to form Thr-AMP and then transferred to the acceptor end of tRNA(Thr). Also edits incorrectly charged L-seryl-tRNA(Thr). The chain is Threonine--tRNA ligase from Rickettsia typhi (strain ATCC VR-144 / Wilmington).